The sequence spans 329 residues: GTPase Obg (329 aa).

One can recognise an Obg domain in the interval methionine 1 to leucine 159. An OBG-type G domain is found at alanine 160–glycine 328. ATP-binding positions include glycine 166–serine 173, phenylalanine 191–valine 195, aspartate 213–glycine 216, asparagine 280–glutamate 283, and serine 309–alanine 311. Residues serine 173 and threonine 193 each contribute to the Mg(2+) site.

The protein belongs to the TRAFAC class OBG-HflX-like GTPase superfamily. OBG GTPase family. In terms of assembly, monomer. It depends on Mg(2+) as a cofactor.

It is found in the cytoplasm. Functionally, an essential GTPase which binds GTP, GDP and possibly (p)ppGpp with moderate affinity, with high nucleotide exchange rates and a fairly low GTP hydrolysis rate. Plays a role in control of the cell cycle, stress response, ribosome biogenesis and in those bacteria that undergo differentiation, in morphogenesis control. The sequence is that of GTPase Obg from Synechococcus sp. (strain CC9605).